The sequence spans 439 residues: Enolase (439 aa).

Glutamine 163 is a binding site for (2R)-2-phosphoglycerate. Residue glutamate 205 is the Proton donor of the active site. Residues aspartate 242, glutamate 287, and aspartate 314 each contribute to the Mg(2+) site. Residues lysine 339, arginine 368, serine 369, and lysine 390 each contribute to the (2R)-2-phosphoglycerate site. The Proton acceptor role is filled by lysine 339.

The protein belongs to the enolase family. It depends on Mg(2+) as a cofactor.

The protein resides in the cytoplasm. Its subcellular location is the secreted. The protein localises to the cell surface. It carries out the reaction (2R)-2-phosphoglycerate = phosphoenolpyruvate + H2O. Its pathway is carbohydrate degradation; glycolysis; pyruvate from D-glyceraldehyde 3-phosphate: step 4/5. Functionally, catalyzes the reversible conversion of 2-phosphoglycerate (2-PG) into phosphoenolpyruvate (PEP). It is essential for the degradation of carbohydrates via glycolysis. The sequence is that of Enolase from Levilactobacillus brevis (strain ATCC 367 / BCRC 12310 / CIP 105137 / JCM 1170 / LMG 11437 / NCIMB 947 / NCTC 947) (Lactobacillus brevis).